The following is a 242-amino-acid chain: ATP-dependent dethiobiotin synthetase BioD (242 aa).

12–17 (EVGKTV) lines the ATP pocket. Residue threonine 16 participates in Mg(2+) binding. The active site involves lysine 37. Residue serine 41 participates in substrate binding. Residues aspartate 51 and 112–115 (EGAG) contribute to the ATP site. Residues aspartate 51 and glutamate 112 each contribute to the Mg(2+) site.

Belongs to the dethiobiotin synthetase family. As to quaternary structure, homodimer. It depends on Mg(2+) as a cofactor.

It localises to the cytoplasm. The enzyme catalyses (7R,8S)-7,8-diammoniononanoate + CO2 + ATP = (4R,5S)-dethiobiotin + ADP + phosphate + 3 H(+). The protein operates within cofactor biosynthesis; biotin biosynthesis; biotin from 7,8-diaminononanoate: step 1/2. Catalyzes a mechanistically unusual reaction, the ATP-dependent insertion of CO2 between the N7 and N8 nitrogen atoms of 7,8-diaminopelargonic acid (DAPA, also called 7,8-diammoniononanoate) to form a ureido ring. The sequence is that of ATP-dependent dethiobiotin synthetase BioD from Bacillus cereus (strain AH820).